The following is a 305-amino-acid chain: Cyclin-dependent kinase 3 (305 aa).

Residues 4-286 enclose the Protein kinase domain; the sequence is FQKVEKIGEG…AKTALAHPYF (283 aa). Residues 10-18 and Lys33 contribute to the ATP site; that span reads IGEGTYGVV. Residue Asp127 is the Proton acceptor of the active site.

The protein belongs to the protein kinase superfamily. CMGC Ser/Thr protein kinase family. CDC2/CDKX subfamily. Interacts with CABLES1 and CABLES2. Interacts with ATF1. Binding to CCNC/cyclin-C promotes RB1 phosphorylation. As to expression, expressed in cancer cell lines and glioblastoma tissue.

The enzyme catalyses L-seryl-[protein] + ATP = O-phospho-L-seryl-[protein] + ADP + H(+). It carries out the reaction L-threonyl-[protein] + ATP = O-phospho-L-threonyl-[protein] + ADP + H(+). In terms of biological role, serine/threonine-protein kinase that plays a critical role in the control of the eukaryotic cell cycle; involved in G0-G1 and G1-S cell cycle transitions. Interacts with CCNC/cyclin-C during interphase. Phosphorylates histone H1, ATF1, RB1 and CABLES1. ATF1 phosphorylation triggers ATF1 transactivation and transcriptional activities, and promotes cell proliferation and transformation. CDK3/cyclin-C mediated RB1 phosphorylation is required for G0-G1 transition. Promotes G1-S transition probably by contributing to the activation of E2F1, E2F2 and E2F3 in a RB1-independent manner. The sequence is that of Cyclin-dependent kinase 3 (CDK3) from Homo sapiens (Human).